The sequence spans 242 residues: Biosynthetic peptidoglycan transglycosylase (242 aa).

The helical transmembrane segment at 12 to 31 threads the bilayer; sequence LLFWLMLASALLVLALRWLP.

The protein belongs to the glycosyltransferase 51 family.

The protein localises to the cell inner membrane. It catalyses the reaction [GlcNAc-(1-&gt;4)-Mur2Ac(oyl-L-Ala-gamma-D-Glu-L-Lys-D-Ala-D-Ala)](n)-di-trans,octa-cis-undecaprenyl diphosphate + beta-D-GlcNAc-(1-&gt;4)-Mur2Ac(oyl-L-Ala-gamma-D-Glu-L-Lys-D-Ala-D-Ala)-di-trans,octa-cis-undecaprenyl diphosphate = [GlcNAc-(1-&gt;4)-Mur2Ac(oyl-L-Ala-gamma-D-Glu-L-Lys-D-Ala-D-Ala)](n+1)-di-trans,octa-cis-undecaprenyl diphosphate + di-trans,octa-cis-undecaprenyl diphosphate + H(+). The protein operates within cell wall biogenesis; peptidoglycan biosynthesis. Peptidoglycan polymerase that catalyzes glycan chain elongation from lipid-linked precursors. The polypeptide is Biosynthetic peptidoglycan transglycosylase (Ectopseudomonas mendocina (strain ymp) (Pseudomonas mendocina)).